Here is a 567-residue protein sequence, read N- to C-terminus: uncharacterized protein (567 aa).

Residues 1-31 (MLDTILINVFRRDGDDDDDDGQDPALQELYS) lie on the Lumenal side of the membrane. The helical transmembrane segment at 32–52 (SWALFILLVLLIGALLTSYYV) threads the bilayer. Over 53–64 (QSKKIRAIHETV) the chain is Cytoplasmic. The helical transmembrane segment at 65-85 (ISVFVGMVVGLIIRVSPGLII) threads the bilayer. The Lumenal portion of the chain corresponds to 86-87 (QN). A helical membrane pass occupies residues 88 to 108 (MVSFHSTYFFNVLLPPIILNS). Over 109-128 (GYELHQSNFFRNIGTILTFA) the chain is Cytoplasmic. Residues 129-149 (FAGTFISAVTLGVLVYIFSFL) form a helical membrane-spanning segment. The Lumenal segment spans residues 150-159 (NFENLSMTFV). Residues 160 to 180 (EALSMGATLSATDPVTVLAIF) traverse the membrane as a helical segment. Over 181–188 (NSYKVDQK) the chain is Cytoplasmic. Residues 189–209 (LYTIIFGESILNDAVAIVMFE) traverse the membrane as a helical segment. Over 210–227 (TLQQFQGKTLHFFTLFSG) the chain is Lumenal. The chain crosses the membrane as a helical span at residues 228 to 248 (IGIFIITFFISLLIGVSIGLI). The Cytoplasmic portion of the chain corresponds to 249 to 277 (TALLLKYSYLRRYPSIESCIILLMAYTSY). A helical membrane pass occupies residues 278–298 (FFSNGCHMSGVVSLLFCGITL). The Lumenal segment spans residues 299 to 315 (KHYAFFNMSYKAKLSTK). A helical membrane pass occupies residues 316–338 (YVFRVLAQLSENFIFIYLGMSLF). The Cytoplasmic portion of the chain corresponds to 339-347 (TQVDLVYKP). A helical membrane pass occupies residues 348-366 (IFILITTVAVTASRYMNVF). Residues 367 to 392 (PLSNLLNKFHRQRNGNLIDHIPYSYQ) are Lumenal-facing. The helical transmembrane segment at 393–413 (MMLFWAGLRGAVGVALAAGFE) threads the bilayer. The Cytoplasmic portion of the chain corresponds to 414 to 424 (GENAQTLRATT). A helical membrane pass occupies residues 425–445 (LVVVVLTLIIFGGTTARMLEI). Residues 446–567 (LHIETGVAAD…RDNLKNGTKK (122 aa)) are Lumenal-facing. The residue at position 515 (serine 515) is a Phosphoserine.

Belongs to the monovalent cation:proton antiporter 1 (CPA1) transporter (TC 2.A.36) family.

It is found in the golgi apparatus membrane. This is an uncharacterized protein from Schizosaccharomyces pombe (strain 972 / ATCC 24843) (Fission yeast).